We begin with the raw amino-acid sequence, 263 residues long: uncharacterized protein (263 aa).

This is an uncharacterized protein from Mycobacterium tuberculosis (strain CDC 1551 / Oshkosh).